We begin with the raw amino-acid sequence, 287 residues long: Heterodimeric geranylgeranyl pyrophosphate synthase small subunit 2, chloroplastic (287 aa).

Mg(2+) contacts are provided by Glu103 and Asp109. Dimethylallyl diphosphate is bound by residues Lys204, Gln241, and Lys250.

It belongs to the FPP/GGPP synthase family. As to quaternary structure, part of a heterodimeric geranyl(geranyl)diphosphate synthase. Mg(2+) is required as a cofactor. As to expression, mainly expressed in trichomes, and, to a lower extent, in roots, leaves, flowers and stems.

The protein resides in the plastid. It localises to the chloroplast thylakoid membrane. In terms of biological role, heterodimeric geranyl(geranyl)-diphosphate (GPP) synthase small subunit. The small subunit alone is inactive in vitro while the large subunit GGPPS1 catalyzes mainly the production of geranygeranyl-diphosphate in vitro. Upon association of the two subunits, the product profile changes and the production of gerany-diphosphate is strongly increased. The sequence is that of Heterodimeric geranylgeranyl pyrophosphate synthase small subunit 2, chloroplastic from Cannabis sativa (Hemp).